The chain runs to 229 residues: UPF0758 protein MA_1979 (229 aa).

One can recognise an MPN domain in the interval 106-228 (KICSPKDVYA…YVSLKDEGFV (123 aa)). Zn(2+) contacts are provided by His-177, His-179, and Asp-190. Residues 177-190 (HNHPSGDPSPSRED) carry the JAMM motif motif.

It belongs to the UPF0758 family.

This chain is UPF0758 protein MA_1979, found in Methanosarcina acetivorans (strain ATCC 35395 / DSM 2834 / JCM 12185 / C2A).